Reading from the N-terminus, the 499-residue chain is BTB/POZ domain-containing protein At5g60050 (499 aa).

Positions 18–30 (PSLSFSPSRISSP) are enriched in low complexity. Positions 18–57 (PSLSFSPSRISSPIKLSTASPPLPPPPPPPPNESTLSNPT) are disordered. Residues 38 to 49 (PPLPPPPPPPPN) show a composition bias toward pro residues. Positions 99–172 (GDVKLTVVGK…MYSDDLKKKL (74 aa)) constitute a BTB domain.

It functions in the pathway protein modification; protein ubiquitination. Its function is as follows. May act as a substrate-specific adapter of an E3 ubiquitin-protein ligase complex (CUL3-RBX1-BTB) which mediates the ubiquitination and subsequent proteasomal degradation of target proteins. The polypeptide is BTB/POZ domain-containing protein At5g60050 (Arabidopsis thaliana (Mouse-ear cress)).